Reading from the N-terminus, the 1467-residue chain is Helicase ARIP4 (1467 aa).

Disordered stretches follow at residues 1–150 (MSDE…YAAP) and 186–234 (DSSS…GGTH). Residues 11 to 49 (PDLDPDVELEDAEEEEEEEEVAVEECDRDDEEDLLDDPS) show a composition bias toward acidic residues. Positions 72-82 (TSTTSSQSEPS) are enriched in low complexity. The span at 100–115 (KKRAQKPSHMRRNIRK) shows a compositional bias: basic residues. Glycyl lysine isopeptide (Lys-Gly) (interchain with G-Cter in SUMO2) cross-links involve residues Lys115 and Lys127. Basic and acidic residues-rich tracts occupy residues 133–147 (ELERRKRLEQQRKDY) and 192–201 (EDEKSSRDEV). Lys272 is covalently cross-linked (Glycyl lysine isopeptide (Lys-Gly) (interchain with G-Cter in SUMO2)). The Helicase ATP-binding domain maps to 292–512 (RFKTSSGFGC…WCMVDFVRPD (221 aa)). 305-312 (HSMGLGKT) serves as a coordination point for ATP. Positions 463–466 (DEGH) match the DEAH box motif. An LXXLL motif 1 motif is present at residues 551–555 (LHSLL). The disordered stretch occupies residues 649-673 (GSAGTSARCPPQGTKGKGEDSTLAS). Residues Lys665, Lys682, Lys759, Lys901, Lys1014, and Lys1018 each participate in a glycyl lysine isopeptide (Lys-Gly) (interchain with G-Cter in SUMO2) cross-link. Residues 728-896 (HLIEESVKLG…RVVDDLNPML (169 aa)) form the Helicase C-terminal domain. Residues 1120–1171 (RATGKPKVPEDGRMAASGSQGPSCESTSNGRHSASSPKAPDPEGLARPVSPD) form a disordered region. Residues 1136 to 1155 (SGSQGPSCESTSNGRHSASS) show a composition bias toward polar residues. Residues Ser1169 and Ser1172 each carry the phosphoserine modification. Disordered regions lie at residues 1184–1221 (DVAAARESRQSSPSTNAALPGPPAQLMDSSAVPGTALG) and 1247–1284 (PVLDLRGHKRKLATPPAAQESSRRRSRKGHLPAPVQPY). Phosphothreonine is present on Thr1260. The LXXLL motif 2 motif lies at 1329 to 1333 (LSNLL). Residues 1445–1467 (AEVGFSSNDDEDKDDDVIEVTGK) form a disordered region. Over residues 1452 to 1467 (NDDEDKDDDVIEVTGK) the composition is skewed to acidic residues.

Belongs to the SNF2/RAD54 helicase family. As to quaternary structure, interacts with AR via its N-terminus. Interacts with DYRK1A. Binds DNA and mononucleosomes, but does not seem to form large multiprotein complexes. Post-translationally, sumoylated.

The protein resides in the nucleus. It catalyses the reaction ATP + H2O = ADP + phosphate + H(+). With respect to regulation, enzyme activity is enhanced by dsDNA (double-stranded DNA) and ssDNA (single-stranded DNA). DNA helicase that modulates androgen receptor (AR)-dependent transactivation in a promoter-dependent manner. Not able to remodel mononucleosomes in vitro. In Homo sapiens (Human), this protein is Helicase ARIP4 (RAD54L2).